The chain runs to 281 residues: Aquaporin-9 (281 aa).

The Cytoplasmic portion of the chain corresponds to 1–17; that stretch reads MGAFVNTKVYIENKNIR. A helical transmembrane segment spans residues 18–36; that stretch reads DWLSEALSMFMYMSLLLGS. Residues 37 to 50 are Extracellular-facing; that stretch reads AATGHFSGREDDAL. Residues 51–69 traverse the membrane as a helical segment; sequence FGVIFQGFSITFGIYIGGA. Topologically, residues 70 to 71 are cytoplasmic; that stretch reads MS. The segment at residues 72 to 84 is an intramembrane region (discontinuously helical); sequence GAIINPALTLAVA. The NPA 1 signature appears at 76–78; sequence NPA. At 85–90 the chain is on the cytoplasmic side; that stretch reads LLGKIS. Residues 91 to 115 form a helical membrane-spanning segment; sequence WRKCIVLQSAQYIGSFIASAVVYLI. Topologically, residues 116 to 157 are extracellular; it reads YNDSLDAFGAGANFTATEPGVFRKDVAGIWSTFPKTYLKERG. N-linked (GlcNAc...) asparagine glycans are attached at residues asparagine 117 and asparagine 128. The chain crosses the membrane as a helical span at residues 158-175; that stretch reads AIFNQIFCSMLLTFGFLA. At 176 to 187 the chain is on the cytoplasmic side; the sequence is ISDYKNFRPSKG. The helical transmembrane segment at 188–204 threads the bilayer; that stretch reads LFPIAVGLLVMTVFLAF. Topologically, residues 205-207 are extracellular; the sequence is SYS. An intramembrane region (discontinuously helical) is located at residues 208–222; sequence TGAAMNPARDFSPRL. Residues 213-215 carry the NPA 2 motif; that stretch reads NPA. At 223 to 241 the chain is on the extracellular side; it reads WSLIIGYGIEVFSYNQYEW. Residues 242–262 form a helical membrane-spanning segment; it reads FWIPWLMPYVGAMLGALIYQL. Topologically, residues 263–281 are cytoplasmic; the sequence is LIGAQWSKGQKGESKHKDP.

This sequence belongs to the MIP/aquaporin (TC 1.A.8) family.

The protein resides in the cell membrane. The enzyme catalyses H2O(in) = H2O(out). Its function is as follows. Aquaglyceroporin that may modulate the water content and osmolytes during anhydrobiosis. The chain is Aquaporin-9 from Milnesium tardigradum (Water bear).